Here is a 226-residue protein sequence, read N- to C-terminus: Phosphoheptose isomerase (226 aa).

The region spanning 50-212 (IAGVFETGGK…ERMMGYGTEC (163 aa)) is the SIS domain. 65 to 67 (NGG) is a substrate binding site. H74 and E78 together coordinate Zn(2+). Residues E78, 109–110 (ND), 135–137 (STS), S140, and Q188 each bind substrate. 2 residues coordinate Zn(2+): Q188 and H196.

Belongs to the SIS family. GmhA subfamily. Requires Zn(2+) as cofactor.

The protein localises to the cytoplasm. It carries out the reaction 2 D-sedoheptulose 7-phosphate = D-glycero-alpha-D-manno-heptose 7-phosphate + D-glycero-beta-D-manno-heptose 7-phosphate. It participates in carbohydrate biosynthesis; D-glycero-D-manno-heptose 7-phosphate biosynthesis; D-glycero-alpha-D-manno-heptose 7-phosphate and D-glycero-beta-D-manno-heptose 7-phosphate from sedoheptulose 7-phosphate: step 1/1. Catalyzes the isomerization of sedoheptulose 7-phosphate in D-glycero-D-manno-heptose 7-phosphate. The sequence is that of Phosphoheptose isomerase from Chlorobium phaeobacteroides (strain DSM 266 / SMG 266 / 2430).